Consider the following 336-residue polypeptide: 3-hydroxyisobutyrate dehydrogenase, mitochondrial (336 aa).

A mitochondrion-targeting transit peptide spans 1-36; that stretch reads MAASLRLLGAASGLRYWSRRLRPAAGSFAAVCSRSV. An NAD(+)-binding site is contributed by 40–68; sequence TPVGFIGLGNMGNPMAKNLMKHGYPLIIY. N6-acetyllysine; alternate is present on residues Lys-60 and Lys-76. Lys-60 and Lys-76 each carry N6-succinyllysine; alternate. An N6-succinyllysine modification is found at Lys-95. Residues 103–104 and Asn-108 contribute to the NAD(+) site; that span reads LP. Lys-121 is modified (N6-acetyllysine). Residue Thr-134 coordinates NAD(+). An N6-succinyllysine modification is found at Lys-141. Lys-145 bears the N6-acetyllysine mark. An N6-acetyllysine; alternate modification is found at Lys-149. Lys-149 carries the post-translational modification N6-succinyllysine; alternate. Lys-209 is a catalytic residue. Residues Lys-238 and Lys-242 each carry the N6-acetyllysine; alternate modification. N6-succinyllysine; alternate occurs at positions 238 and 242. Lys-284 is an NAD(+) binding site. Lys-297 carries the post-translational modification N6-succinyllysine. N6-acetyllysine; alternate is present on Lys-321. Lys-321 is subject to N6-succinyllysine; alternate.

Belongs to the HIBADH-related family. 3-hydroxyisobutyrate dehydrogenase subfamily. As to quaternary structure, homodimer. Detected in skin fibroblasts.

The protein localises to the mitochondrion. It catalyses the reaction 3-hydroxy-2-methylpropanoate + NAD(+) = 2-methyl-3-oxopropanoate + NADH + H(+). The protein operates within amino-acid degradation; L-valine degradation. In Homo sapiens (Human), this protein is 3-hydroxyisobutyrate dehydrogenase, mitochondrial (HIBADH).